We begin with the raw amino-acid sequence, 196 residues long: Large ribosomal subunit protein eL15 (196 aa).

Residues 153 to 196 are disordered; the sequence is DPSSRGRATRGKTSAGRKGRGMATRGKGTEKTRPSIRAYKSRGK. Residues 159 to 172 show a composition bias toward basic residues; sequence RATRGKTSAGRKGR.

Belongs to the eukaryotic ribosomal protein eL15 family.

In Methanosarcina acetivorans (strain ATCC 35395 / DSM 2834 / JCM 12185 / C2A), this protein is Large ribosomal subunit protein eL15.